Reading from the N-terminus, the 245-residue chain is 14-3-3 protein zeta (245 aa).

This sequence belongs to the 14-3-3 family. Homodimer. In terms of tissue distribution, present in all adult tissues examined with the highest levels in the brain.

Its subcellular location is the cytoplasm. Functionally, adapter protein implicated in the regulation of a large spectrum of both general and specialized signaling pathways. Binds to a large number of partners, usually by recognition of a phosphoserine or phosphothreonine motif. Binding generally results in the modulation of the activity of the binding partner. This Xenopus laevis (African clawed frog) protein is 14-3-3 protein zeta (ywhaz).